A 310-amino-acid polypeptide reads, in one-letter code: Isoflavone reductase homolog P3 (310 aa).

NADP(+) is bound by residues 12-18 (GGTGYIG), Arg-37, and Lys-46. Residue Lys-134 is the Proton acceptor of the active site. Arg-138 serves as a coordination point for NADP(+).

The protein belongs to the NmrA-type oxidoreductase family. Isoflavone reductase subfamily.

It is found in the cytoplasm. This chain is Isoflavone reductase homolog P3, found in Arabidopsis thaliana (Mouse-ear cress).